A 117-amino-acid chain; its full sequence is Immunoglobulin heavy variable 1-84 (117 aa).

The first 19 residues, 1 to 19 (MGWSWIFLFLLSGTAGVHC), serve as a signal peptide directing secretion. Residues 20-49 (QIQLQQSGPELVKPGASVKISCKASGYTFT) form a framework-1 region. The Ig-like domain maps to 31–117 (VKPGASVKIS…EDSAVYFCAR (87 aa)). A disulfide bridge connects residues cysteine 41 and cysteine 115. The complementarity-determining-1 stretch occupies residues 50-54 (DYYIN). Positions 55–68 (WVKQRPGQGLEWIG) are framework-2. A complementarity-determining-2 region spans residues 69-85 (WIYPGSGNTKYNEKFKG). The framework-3 stretch occupies residues 86 to 117 (KATLTVDTSSSTAYMQLSSLTSEDSAVYFCAR).

The polypeptide is Immunoglobulin heavy variable 1-84 (Mus musculus (Mouse)).